We begin with the raw amino-acid sequence, 104 residues long: Sweet protein mabinlin-3 (104 aa).

Cystine bridges form between C4-C53, C17-C42, C43-C91, and C55-C99.

Belongs to the 2S seed storage albumins family. As to quaternary structure, heterodimer of a small A and a large B chain linked by disulfide bonds.

Its function is as follows. Heat stable 2S seed storage protein having sweetness-inducing activity. The chain is Sweet protein mabinlin-3 from Capparis masaikai (Mabinlang).